The following is a 482-amino-acid chain: Adenylyltransferase and sulfurtransferase uba4 (482 aa).

Residues glycine 93, aspartate 114, 121–125 (SNLHR), lysine 138, and 182–183 (DN) each bind ATP. Zn(2+)-binding residues include cysteine 231 and cysteine 234. The active-site Glycyl thioester intermediate; for adenylyltransferase activity is the cysteine 248. Positions 309 and 312 each coordinate Zn(2+). The Rhodanese domain occupies 362–480 (EEKEPTIIDV…WKEQVDPEWP (119 aa)). Cysteine 435 acts as the Cysteine persulfide intermediate; for sulfurtransferase activity in catalysis.

It in the N-terminal section; belongs to the HesA/MoeB/ThiF family. UBA4 subfamily. The cofactor is Zn(2+).

The protein resides in the cytoplasm. It is found in the cytosol. It carries out the reaction [molybdopterin-synthase sulfur-carrier protein]-C-terminal Gly-Gly + ATP + H(+) = [molybdopterin-synthase sulfur-carrier protein]-C-terminal Gly-Gly-AMP + diphosphate. It catalyses the reaction [molybdopterin-synthase sulfur-carrier protein]-C-terminal Gly-Gly-AMP + S-sulfanyl-L-cysteinyl-[cysteine desulfurase] + AH2 = [molybdopterin-synthase sulfur-carrier protein]-C-terminal-Gly-aminoethanethioate + L-cysteinyl-[cysteine desulfurase] + A + AMP + 2 H(+). It functions in the pathway tRNA modification; 5-methoxycarbonylmethyl-2-thiouridine-tRNA biosynthesis. Its pathway is cofactor biosynthesis; molybdopterin biosynthesis. In terms of biological role, plays a central role in 2-thiolation of mcm(5)S(2)U at tRNA wobble positions of cytosolic tRNA(Lys), tRNA(Glu) and tRNA(Gln). Also essential during biosynthesis of the molybdenum cofactor. Acts by mediating the C-terminal thiocarboxylation of sulfur carriers urm1 and mocs2a. Its N-terminus first activates urm1 and mocs2a as acyl-adenylates (-COAMP), then the persulfide sulfur on the catalytic cysteine is transferred to urm1 and mocs2a to form thiocarboxylation (-COSH) of their C-terminus. The reaction probably involves hydrogen sulfide that is generated from the persulfide intermediate and that acts as a nucleophile towards urm1 and mocs2a. Subsequently, a transient disulfide bond is formed. Does not use thiosulfate as sulfur donor; nfs1 probably acting as a sulfur donor for thiocarboxylation reactions. The protein is Adenylyltransferase and sulfurtransferase uba4 of Aspergillus niger (strain ATCC MYA-4892 / CBS 513.88 / FGSC A1513).